We begin with the raw amino-acid sequence, 183 residues long: Probable RNA 2'-phosphotransferase (183 aa).

This sequence belongs to the KptA/TPT1 family.

Its function is as follows. Removes the 2'-phosphate from RNA via an intermediate in which the phosphate is ADP-ribosylated by NAD followed by a presumed transesterification to release the RNA and generate ADP-ribose 1''-2''-cyclic phosphate (APPR&gt;P). May function as an ADP-ribosylase. The polypeptide is Probable RNA 2'-phosphotransferase (Pyrococcus furiosus (strain ATCC 43587 / DSM 3638 / JCM 8422 / Vc1)).